Reading from the N-terminus, the 432-residue chain is Adenosylhomocysteinase (432 aa).

Serine 2 is modified (N-acetylserine). 3 residues coordinate substrate: threonine 57, aspartate 131, and glutamate 156. At serine 183 the chain carries Phosphoserine. Positions 183-350 are NAD binding; that stretch reads SVTKSKFDNL…EGRLVNLGCA (168 aa). Substrate-binding residues include lysine 186 and aspartate 190. Lysine 186 is subject to N6-(2-hydroxyisobutyryl)lysine. Residue tyrosine 193 is modified to Phosphotyrosine.

This sequence belongs to the adenosylhomocysteinase family. As to quaternary structure, homotetramer. Interaction with AHCYL1. NAD(+) serves as cofactor.

The protein localises to the cytoplasm. It is found in the melanosome. It localises to the nucleus. The protein resides in the endoplasmic reticulum. The enzyme catalyses S-adenosyl-L-homocysteine + H2O = L-homocysteine + adenosine. The protein operates within amino-acid biosynthesis; L-homocysteine biosynthesis; L-homocysteine from S-adenosyl-L-homocysteine: step 1/1. In terms of biological role, catalyzes the hydrolysis of S-adenosyl-L-homocysteine to form adenosine and homocysteine. Binds copper ions. The chain is Adenosylhomocysteinase (AHCY) from Macaca fascicularis (Crab-eating macaque).